Consider the following 127-residue polypeptide: Aspartate 1-decarboxylase (127 aa).

Ser25 acts as the Schiff-base intermediate with substrate; via pyruvic acid in catalysis. A Pyruvic acid (Ser) modification is found at Ser25. Substrate is bound at residue Thr57. Tyr58 (proton donor) is an active-site residue. Residue 73–75 (GAA) participates in substrate binding.

Belongs to the PanD family. As to quaternary structure, heterooctamer of four alpha and four beta subunits. The cofactor is pyruvate. Post-translationally, is synthesized initially as an inactive proenzyme, which is activated by self-cleavage at a specific serine bond to produce a beta-subunit with a hydroxyl group at its C-terminus and an alpha-subunit with a pyruvoyl group at its N-terminus.

The protein resides in the cytoplasm. The catalysed reaction is L-aspartate + H(+) = beta-alanine + CO2. It participates in cofactor biosynthesis; (R)-pantothenate biosynthesis; beta-alanine from L-aspartate: step 1/1. Functionally, catalyzes the pyruvoyl-dependent decarboxylation of aspartate to produce beta-alanine. The chain is Aspartate 1-decarboxylase from Neisseria gonorrhoeae (strain ATCC 700825 / FA 1090).